Consider the following 411-residue polypeptide: Arginine deiminase (411 aa).

C401 (amidino-cysteine intermediate) is an active-site residue.

The protein belongs to the arginine deiminase family. Glycosylated.

The protein localises to the cytoplasm. It catalyses the reaction L-arginine + H2O = L-citrulline + NH4(+). It functions in the pathway amino-acid degradation; L-arginine degradation via ADI pathway; carbamoyl phosphate from L-arginine: step 1/2. The sequence is that of Arginine deiminase (arcA) from Streptococcus pyogenes serotype M1.